We begin with the raw amino-acid sequence, 58 residues long: Large ribosomal subunit protein uL30 (58 aa).

Belongs to the universal ribosomal protein uL30 family. As to quaternary structure, part of the 50S ribosomal subunit.

This is Large ribosomal subunit protein uL30 from Bacteroides fragilis (strain ATCC 25285 / DSM 2151 / CCUG 4856 / JCM 11019 / LMG 10263 / NCTC 9343 / Onslow / VPI 2553 / EN-2).